A 118-amino-acid chain; its full sequence is UPF0102 protein Csac_2148 (118 aa).

It belongs to the UPF0102 family.

This chain is UPF0102 protein Csac_2148, found in Caldicellulosiruptor saccharolyticus (strain ATCC 43494 / DSM 8903 / Tp8T 6331).